The sequence spans 476 residues: Ovarian-specific serine/threonine-protein kinase Lok (476 aa).

One can recognise an FHA domain in the interval 69-129 (FTAGRGEAND…NGTFVNNEKI (61 aa)). Positions 174 to 441 (YYVNRKLGSG…IDDVLQSSWL (268 aa)) constitute a Protein kinase domain. Residues 180–188 (LGSGAYGLV) and Lys-203 contribute to the ATP site. The active-site Proton acceptor is the Asp-303.

This sequence belongs to the protein kinase superfamily. CAMK Ser/Thr protein kinase family. CDS1 subfamily. As to expression, in stage 3 embryos, both isoforms are expressed in both somatic and pole cell nuclei. Expression in pole cell nuclei is sustained until stage 9 and weakly expressed after pole cell invagination into the abdominal cavity.

The protein localises to the nucleus speckle. The enzyme catalyses L-seryl-[protein] + ATP = O-phospho-L-seryl-[protein] + ADP + H(+). The catalysed reaction is L-threonyl-[protein] + ATP = O-phospho-L-threonyl-[protein] + ADP + H(+). In terms of biological role, may have a role in germline establishment. In Drosophila melanogaster (Fruit fly), this protein is Ovarian-specific serine/threonine-protein kinase Lok (lok).